A 276-amino-acid chain; its full sequence is 2-dehydro-3-deoxyphosphooctonate aldolase (276 aa).

The protein belongs to the KdsA family.

The protein resides in the cytoplasm. The catalysed reaction is D-arabinose 5-phosphate + phosphoenolpyruvate + H2O = 3-deoxy-alpha-D-manno-2-octulosonate-8-phosphate + phosphate. It participates in carbohydrate biosynthesis; 3-deoxy-D-manno-octulosonate biosynthesis; 3-deoxy-D-manno-octulosonate from D-ribulose 5-phosphate: step 2/3. It functions in the pathway bacterial outer membrane biogenesis; lipopolysaccharide biosynthesis. This Chelativorans sp. (strain BNC1) protein is 2-dehydro-3-deoxyphosphooctonate aldolase.